A 360-amino-acid chain; its full sequence is MSDIDQLNTSLLAEIAAADDETALEAVRVSALGKKGSVSELLKTLGAMTPEERQSKGAAINVLKNAVTEALTARKTTLRQAAIDARLQAETVDVSLPVRSSPAERGRIHPISQIVDEITAIFADMGFSIAEGPDIETDYYNFTALNFPEGHPAREMHDTFFFNPDENGERKVLRTHTSPVQVRTMEAQTPPIRIIIPGKTYRQDSDATHSPMFHQVEGLVVDKKANVANLRWVLEEFCKTFFEVDSVTMRFRPSFFPFTEPSFEVDIQCDRSGPIVKFGEGTDWMEILGCGMVHPNVLRYGGLDPDEYQGFAWGMGLDRIAMLKYGMPDLRDFFNADVRWMTHYGFRPLDMPTLFGGLSA.

Glu260 lines the Mg(2+) pocket.

It belongs to the class-II aminoacyl-tRNA synthetase family. Phe-tRNA synthetase alpha subunit type 1 subfamily. Tetramer of two alpha and two beta subunits. Mg(2+) serves as cofactor.

It is found in the cytoplasm. The enzyme catalyses tRNA(Phe) + L-phenylalanine + ATP = L-phenylalanyl-tRNA(Phe) + AMP + diphosphate + H(+). This Rhizobium johnstonii (strain DSM 114642 / LMG 32736 / 3841) (Rhizobium leguminosarum bv. viciae) protein is Phenylalanine--tRNA ligase alpha subunit.